Here is a 97-residue protein sequence, read N- to C-terminus: Integration host factor subunit alpha (97 aa).

Belongs to the bacterial histone-like protein family. Heterodimer of an alpha and a beta chain.

In terms of biological role, this protein is one of the two subunits of integration host factor, a specific DNA-binding protein that functions in genetic recombination as well as in transcriptional and translational control. The chain is Integration host factor subunit alpha from Histophilus somni (strain 2336) (Haemophilus somnus).